The following is a 130-amino-acid chain: Small ribosomal subunit protein uS8 (130 aa).

Belongs to the universal ribosomal protein uS8 family. Part of the 30S ribosomal subunit. Contacts proteins S5 and S12.

Its function is as follows. One of the primary rRNA binding proteins, it binds directly to 16S rRNA central domain where it helps coordinate assembly of the platform of the 30S subunit. The protein is Small ribosomal subunit protein uS8 of Buchnera aphidicola subsp. Acyrthosiphon kondoi (Acyrthosiphon kondoi symbiotic bacterium).